A 325-amino-acid polypeptide reads, in one-letter code: Putative S-adenosyl-L-methionine-dependent methyltransferase MT0917 (325 aa).

S-adenosyl-L-methionine contacts are provided by residues aspartate 126 and 155–156; that span reads DL.

Belongs to the UPF0677 family.

Functionally, exhibits S-adenosyl-L-methionine-dependent methyltransferase activity. This chain is Putative S-adenosyl-L-methionine-dependent methyltransferase MT0917, found in Mycobacterium tuberculosis (strain CDC 1551 / Oshkosh).